Consider the following 808-residue polypeptide: Receptor like protein 27 (808 aa).

A signal peptide spans 1–31 (MLFFIKVFMKTILSVLLLFFIFASSFTLVVG). Residues 32-740 (LAGCRPDQIQ…DEDEEVLNWK (709 aa)) lie on the Extracellular side of the membrane. 7 N-linked (GlcNAc...) asparagine glycosylation sites follow: Asn-56, Asn-68, Asn-90, Asn-103, Asn-108, Asn-144, and Asn-167. LRR repeat units follow at residues 96–120 (LQHLRYLNLSNNNFTSASLPSGFGN), 122–144 (NRLEVLYLSSNGFLGQVPSSFSN), 145–170 (LSQLNILDLSHNELTGSFPFVQNLTK), 172–192 (SILVLSYNHFSGTIPSSLLTL), 193–218 (PFLSSLDLRENYLTGSIEAPNSSTSS), 220–241 (LEFMYLGNNHFEGQILEPISKL), 242–265 (INLKHLDLSFLKTSYPIDLNLFSS), 266–291 (FKSLVRLVLSGNSLLATSITSDSKIP), 293–314 (NLENLVLLSCGLIEFPTILKNL), 315–338 (TKLEHIDLSNNKIKGKVPEWFWNL), 340–363 (RLRRVNLFNNLFTDLEGSEEVLVN), and 364–387 (SSVRLLDLAYNHFRGPFPKPPLSI). Residue Asn-213 is glycosylated (N-linked (GlcNAc...) asparagine). The N-linked (GlcNAc...) asparagine glycan is linked to Asn-313. N-linked (GlcNAc...) asparagine glycosylation occurs at Asn-363. One copy of the LRR 13; degenerate repeat lies at 388-407 (NLLSAWNNSFTGNIPLETCN). Residues Asn-394, Asn-407, and Asn-420 are each glycosylated (N-linked (GlcNAc...) asparagine). LRR repeat units follow at residues 408–434 (RSSLAILDLSYNNLTGPIPRCLSDFQE), 436–456 (LIVVNLRKNNLEGSLPDIFSD), 457–481 (GALLRTLDVGYNQLTGKLPRSLLNC), 483–504 (MLRFVSVDHNKIKDTFPFWLKA), 505–529 (LPDLQALTLRSNKFHGPISPPDRGP), 532–556 (FPKLRILEISDNNFTGSLPPNYFVN), 601–625 (LTSYATIDFSGNKLEGQIPESIGLL), 626–649 (KALIALNLSNNAFTGHIPLSLANV), 650–673 (TELESLDLSRNQLSGTIPNGLKTL), and 675–698 (FLAYISVAHNQLIGEIPQGTQITG). A glycan (N-linked (GlcNAc...) asparagine) is linked at Asn-480. Asn-544 carries N-linked (GlcNAc...) asparagine glycosylation. N-linked (GlcNAc...) asparagine glycosylation is found at Asn-632 and Asn-648. A helical membrane pass occupies residues 741–761 (AVVIGYWPGLLLGLIMAHVIA). The Cytoplasmic segment spans residues 762 to 808 (SFKPKWLVKIVGPEKRKEDNPVRLFMTLDSRWDSFNNKKNVEQKSDM).

It belongs to the RLP family.

The protein localises to the cell membrane. The chain is Receptor like protein 27 from Arabidopsis thaliana (Mouse-ear cress).